A 399-amino-acid chain; its full sequence is MNILVINTGSSSLKYQLIDMTNESVLAKGVCDRIGLEHSFLKHTKTGGETVVIEKDLYNHKLAIQEVISALTDEKIGVIKSMSEISAVGHRIVHGGEKFKESAIIDEDVMKAIRDCVELAPLHNPSNIIGIEACKQILPDVPMVAVFDTAFHQTMPRHAYIYALPYEIYEKYKLRKYGFHGTSHKYVAHRAAQMLGKPIESLKLITCHLGNGASICAVKGGKSVDTSMGFTPLQGLCMGTRSGNVDPAVITYLMEKEKMNINDINNFLNKKSGVLGISGVSSDFRDVQDAAEKGDDRAQLALDIFCYGVRKYIGKYIAVLNGVDAVVFTAGIGENNAYIRREVLKDMDFFGIKIDLDKNEVKGKEADISAPDAKVKTLVIPTNEELEIARETLRLVKNL.

Asn7 serves as a coordination point for Mg(2+). Residue Lys14 coordinates ATP. Position 91 (Arg91) interacts with substrate. Asp148 (proton donor/acceptor) is an active-site residue. Residues 208–212, 283–285, and 331–335 contribute to the ATP site; these read HLGNG, DFR, and GIGEN. Glu384 is a binding site for Mg(2+).

Belongs to the acetokinase family. In terms of assembly, homodimer. Mg(2+) serves as cofactor. It depends on Mn(2+) as a cofactor.

The protein localises to the cytoplasm. The enzyme catalyses acetate + ATP = acetyl phosphate + ADP. Its pathway is metabolic intermediate biosynthesis; acetyl-CoA biosynthesis; acetyl-CoA from acetate: step 1/2. Catalyzes the formation of acetyl phosphate from acetate and ATP. Can also catalyze the reverse reaction. This is Acetate kinase from Acetivibrio thermocellus (strain ATCC 27405 / DSM 1237 / JCM 9322 / NBRC 103400 / NCIMB 10682 / NRRL B-4536 / VPI 7372) (Clostridium thermocellum).